Consider the following 419-residue polypeptide: Histidine--tRNA ligase (419 aa).

It belongs to the class-II aminoacyl-tRNA synthetase family. As to quaternary structure, homodimer.

It localises to the cytoplasm. The enzyme catalyses tRNA(His) + L-histidine + ATP = L-histidyl-tRNA(His) + AMP + diphosphate + H(+). This Synechococcus sp. (strain JA-3-3Ab) (Cyanobacteria bacterium Yellowstone A-Prime) protein is Histidine--tRNA ligase.